The sequence spans 109 residues: Spermidine export protein MdtI (109 aa).

Residues 1 to 5 are Periplasmic-facing; that stretch reads MAQFE. The chain crosses the membrane as a helical span at residues 6-26; the sequence is WVHAAWLALAIVLEIIANVFL. The Cytoplasmic segment spans residues 27 to 35; it reads KFSDGFRRK. Residues 36–56 form a helical membrane-spanning segment; the sequence is IFGLLSLAAVLAAFSALSQAV. Residues 57 to 63 lie on the Periplasmic side of the membrane; it reads KGIDLSV. Residues 64-84 form a helical membrane-spanning segment; that stretch reads AYALWGGFGIAATLAAGWILF. The Cytoplasmic segment spans residues 85 to 87; sequence GQR. The helical transmembrane segment at 88 to 108 threads the bilayer; that stretch reads LNRKGWIGLVLLLAGMIMVKL. Position 109 (Ala109) is a topological domain, periplasmic.

The protein belongs to the drug/metabolite transporter (DMT) superfamily. Small multidrug resistance (SMR) (TC 2.A.7.1) family. MdtI subfamily. In terms of assembly, forms a complex with MdtJ.

The protein resides in the cell inner membrane. Catalyzes the excretion of spermidine. This Escherichia coli O6:H1 (strain CFT073 / ATCC 700928 / UPEC) protein is Spermidine export protein MdtI (mdtI).